A 660-amino-acid chain; its full sequence is Peroxisomal acyl-coenzyme A oxidase 1 (660 aa).

Position 26 is a phosphoserine (Ser-26). Lys-89 and Lys-90 each carry N6-succinyllysine. Residues Thr-139 and Gly-178 each contribute to the FAD site. Lys-216 carries the post-translational modification N6-acetyllysine. Lys-241 bears the N6-succinyllysine mark. N6-acetyllysine occurs at positions 255, 267, and 272. Lys-349 bears the N6-succinyllysine mark. The Proton acceptor role is filled by Glu-421. An N6-acetyllysine; alternate mark is found at Lys-437 and Lys-446. 2 positions are modified to N6-succinyllysine; alternate: Lys-437 and Lys-446. Lys-500 is modified (N6-acetyllysine). N6-acetyllysine; alternate is present on Lys-512. Lys-512 carries the post-translational modification N6-succinyllysine; alternate. The residue at position 542 (Lys-542) is an N6-succinyllysine. N6-acetyllysine; alternate is present on Lys-637. The residue at position 637 (Lys-637) is an N6-succinyllysine; alternate. An N6-succinyllysine modification is found at Lys-643. A Phosphoserine modification is found at Ser-649. The residue at position 651 (Lys-651) is an N6-acetyllysine. Lys-654 carries the N6-succinyllysine modification. The short motif at 658-660 (SKL) is the Microbody targeting signal element.

Belongs to the acyl-CoA oxidase family. As to quaternary structure, homodimer. Interacts with LONP2. It depends on FAD as a cofactor.

It is found in the peroxisome. The catalysed reaction is a 2,3-saturated acyl-CoA + O2 = a (2E)-enoyl-CoA + H2O2. The enzyme catalyses hexadecanoyl-CoA + O2 = (2E)-hexadecenoyl-CoA + H2O2. It catalyses the reaction dodecanoyl-CoA + O2 = (2E)-dodecenoyl-CoA + H2O2. It carries out the reaction octanoyl-CoA + O2 = (2E)-octenoyl-CoA + H2O2. The catalysed reaction is decanoyl-CoA + O2 = (2E)-decenoyl-CoA + H2O2. The enzyme catalyses tetradecanoyl-CoA + O2 = (2E)-tetradecenoyl-CoA + H2O2. It catalyses the reaction hexadecanedioyl-CoA + O2 = (2E)-hexadecenedioyl-CoA + H2O2. It carries out the reaction tetracosanoyl-CoA + O2 = (2E)-tetracosenoyl-CoA + H2O2. The catalysed reaction is glutaryl-CoA + O2 = (2E)-glutaconyl-CoA + H2O2. The enzyme catalyses hexanoyl-CoA + O2 = (2E)-hexenoyl-CoA + H2O2. It catalyses the reaction octadecanoyl-CoA + O2 = (2E)-octadecenoyl-CoA + H2O2. It carries out the reaction (5Z,8Z,11Z,14Z,17Z)-eicosapentaenoyl-CoA + O2 = (2E,5Z,8Z,11Z,14Z,17Z)-icosahexaenoyl-CoA + H2O2. The catalysed reaction is (6Z,9Z,12Z,15Z,18Z,21Z)-tetracosahexaenoyl-CoA + O2 = (2E,6Z,9Z,12Z,15Z,18Z,21Z)-tetracosaheptaenoyl-CoA + H2O2. It functions in the pathway lipid metabolism; peroxisomal fatty acid beta-oxidation. Functionally, involved in the initial and rate-limiting step of peroxisomal beta-oxidation of straight-chain saturated and unsaturated very-long-chain fatty acids. Catalyzes the desaturation of fatty acyl-CoAs such as palmitoyl-CoA (hexadecanoyl-CoA) to 2-trans-enoyl-CoAs ((2E)-enoyl-CoAs) such as (2E)-hexadecenoyl-CoA, and donates electrons directly to molecular oxygen (O(2)), thereby producing hydrogen peroxide (H(2)O(2)). Shows highest activity against medium-chain fatty acyl-CoAs. Shows optimum activity with a chain length of 10 carbons (decanoyl-CoA) in vitro. Its function is as follows. Is active against a much broader range of substrates and shows activity towards long-chain acyl-CoAs. This is Peroxisomal acyl-coenzyme A oxidase 1 from Pongo abelii (Sumatran orangutan).